Here is a 1291-residue protein sequence, read N- to C-terminus: DNA-directed RNA polymerase subunit beta (1291 aa).

This sequence belongs to the RNA polymerase beta chain family. The RNAP catalytic core consists of 2 alpha, 1 beta, 1 beta' and 1 omega subunit. When a sigma factor is associated with the core the holoenzyme is formed, which can initiate transcription.

It catalyses the reaction RNA(n) + a ribonucleoside 5'-triphosphate = RNA(n+1) + diphosphate. Its function is as follows. DNA-dependent RNA polymerase catalyzes the transcription of DNA into RNA using the four ribonucleoside triphosphates as substrates. This is DNA-directed RNA polymerase subunit beta from Cytophaga hutchinsonii (strain ATCC 33406 / DSM 1761 / CIP 103989 / NBRC 15051 / NCIMB 9469 / D465).